The sequence spans 599 residues: NADH-quinone oxidoreductase subunit C/D (599 aa).

Residues 1–189 form an NADH dehydrogenase I subunit C region; sequence MTELMTQNSA…DPFVLTKQKE (189 aa). Residues 213-599 form an NADH dehydrogenase I subunit D region; sequence DFMFLNLGPN…IDFVMSDVDR (387 aa).

It in the N-terminal section; belongs to the complex I 30 kDa subunit family. In the C-terminal section; belongs to the complex I 49 kDa subunit family. In terms of assembly, NDH-1 is composed of 13 different subunits. Subunits NuoB, CD, E, F, and G constitute the peripheral sector of the complex.

It is found in the cell inner membrane. It catalyses the reaction a quinone + NADH + 5 H(+)(in) = a quinol + NAD(+) + 4 H(+)(out). In terms of biological role, NDH-1 shuttles electrons from NADH, via FMN and iron-sulfur (Fe-S) centers, to quinones in the respiratory chain. The immediate electron acceptor for the enzyme in this species is believed to be ubiquinone. Couples the redox reaction to proton translocation (for every two electrons transferred, four hydrogen ions are translocated across the cytoplasmic membrane), and thus conserves the redox energy in a proton gradient. This chain is NADH-quinone oxidoreductase subunit C/D, found in Sodalis glossinidius (strain morsitans).